Here is a 437-residue protein sequence, read N- to C-terminus: Enolase (437 aa).

Glutamine 162 lines the (2R)-2-phosphoglycerate pocket. Glutamate 204 serves as the catalytic Proton donor. Mg(2+) contacts are provided by aspartate 251, glutamate 297, and aspartate 324. Residues lysine 349, arginine 378, serine 379, and lysine 400 each contribute to the (2R)-2-phosphoglycerate site. The active-site Proton acceptor is lysine 349.

The protein belongs to the enolase family. Mg(2+) is required as a cofactor.

The protein localises to the cytoplasm. The protein resides in the secreted. Its subcellular location is the cell surface. The enzyme catalyses (2R)-2-phosphoglycerate = phosphoenolpyruvate + H2O. The protein operates within carbohydrate degradation; glycolysis; pyruvate from D-glyceraldehyde 3-phosphate: step 4/5. Catalyzes the reversible conversion of 2-phosphoglycerate (2-PG) into phosphoenolpyruvate (PEP). It is essential for the degradation of carbohydrates via glycolysis. This is Enolase from Chlorobium chlorochromatii (strain CaD3).